Reading from the N-terminus, the 370-residue chain is MATLRLDGIRKRYPNGMTALHSIDLSVADGELIVVVGPSGCGKSTLLRILAGLEPITAGELAINGRRVNELEPAARDIAMVFQNYALYPHMSVAGNMAYALKNRGTPKDEIRRRVANTAALLGLDDLLERRPRQLSGGQRQRVAMGRAIIREPQVFLFDEPLSNLDAKLRVQMRLEIRRLQKRLGITSVYVTHDQVEAMTLADRLVVMNGGHVEQCGTPMALYARPATRFVASFLGSPAMNFLPVTAHAGGVVLPNGAQVALPAILPEGDAATLGIRPEHLVEATASGEAAATLDVTVEMLEPLGADTLAYTRLPGVETWLVVRLDGAHAAREGQRLSLALPVAHCHVFDARGARVPMTGREDAEALAAQ.

In terms of domain architecture, ABC transporter spans 4 to 235; sequence LRLDGIRKRY…PATRFVASFL (232 aa). 37–44 is an ATP binding site; the sequence is GPSGCGKS.

It belongs to the ABC transporter superfamily. sn-glycerol-3-phosphate importer (TC 3.A.1.1.3) family. In terms of assembly, the complex is composed of two ATP-binding proteins (UgpC), two transmembrane proteins (UgpA and UgpE) and a solute-binding protein (UgpB).

The protein resides in the cell inner membrane. It catalyses the reaction sn-glycerol 3-phosphate(out) + ATP + H2O = sn-glycerol 3-phosphate(in) + ADP + phosphate + H(+). In terms of biological role, part of the ABC transporter complex UgpBAEC involved in sn-glycerol-3-phosphate (G3P) import. Responsible for energy coupling to the transport system. This chain is sn-glycerol-3-phosphate import ATP-binding protein UgpC, found in Chromohalobacter salexigens (strain ATCC BAA-138 / DSM 3043 / CIP 106854 / NCIMB 13768 / 1H11).